We begin with the raw amino-acid sequence, 224 residues long: UPF0758 protein Neut_0782 (224 aa).

Residues isoleucine 102–isoleucine 224 enclose the MPN domain. Zn(2+)-binding residues include histidine 173, histidine 175, and aspartate 186. Residues histidine 173 to aspartate 186 carry the JAMM motif motif.

It belongs to the UPF0758 family.

The protein is UPF0758 protein Neut_0782 of Nitrosomonas eutropha (strain DSM 101675 / C91 / Nm57).